We begin with the raw amino-acid sequence, 1379 residues long: DNA-directed RNA polymerase subunit beta'' (1379 aa).

Zn(2+)-binding residues include Cys220, Cys293, Cys300, and Cys303.

Belongs to the RNA polymerase beta' chain family. RpoC2 subfamily. In terms of assembly, in plastids the minimal PEP RNA polymerase catalytic core is composed of four subunits: alpha, beta, beta', and beta''. When a (nuclear-encoded) sigma factor is associated with the core the holoenzyme is formed, which can initiate transcription. It depends on Zn(2+) as a cofactor.

Its subcellular location is the plastid. The protein localises to the chloroplast. It carries out the reaction RNA(n) + a ribonucleoside 5'-triphosphate = RNA(n+1) + diphosphate. In terms of biological role, DNA-dependent RNA polymerase catalyzes the transcription of DNA into RNA using the four ribonucleoside triphosphates as substrates. In Capsella bursa-pastoris (Shepherd's purse), this protein is DNA-directed RNA polymerase subunit beta''.